A 408-amino-acid polypeptide reads, in one-letter code: LL-diaminopimelate aminotransferase (408 aa).

2 residues coordinate substrate: Tyr15 and Gly42. Pyridoxal 5'-phosphate contacts are provided by residues Tyr72, 108-109 (SK), Tyr132, Asn187, Tyr218, and 246-248 (SFS). Lys109, Tyr132, and Asn187 together coordinate substrate. At Lys249 the chain carries N6-(pyridoxal phosphate)lysine. The pyridoxal 5'-phosphate site is built by Arg257 and Asn292. Substrate is bound by residues Asn292 and Arg388.

This sequence belongs to the class-I pyridoxal-phosphate-dependent aminotransferase family. LL-diaminopimelate aminotransferase subfamily. In terms of assembly, homodimer. It depends on pyridoxal 5'-phosphate as a cofactor.

It catalyses the reaction (2S,6S)-2,6-diaminopimelate + 2-oxoglutarate = (S)-2,3,4,5-tetrahydrodipicolinate + L-glutamate + H2O + H(+). It functions in the pathway amino-acid biosynthesis; L-lysine biosynthesis via DAP pathway; LL-2,6-diaminopimelate from (S)-tetrahydrodipicolinate (aminotransferase route): step 1/1. Involved in the synthesis of meso-diaminopimelate (m-DAP or DL-DAP), required for both lysine and peptidoglycan biosynthesis. Catalyzes the direct conversion of tetrahydrodipicolinate to LL-diaminopimelate. In Prochlorococcus marinus (strain MIT 9303), this protein is LL-diaminopimelate aminotransferase.